The following is a 265-amino-acid chain: Glutamate racemase (265 aa).

Substrate is bound by residues 12–13 (DS) and 44–45 (YG). The active-site Proton donor/acceptor is Cys-75. Position 76 to 77 (76 to 77 (NT)) interacts with substrate. Cys-186 (proton donor/acceptor) is an active-site residue. Residue 187–188 (TH) coordinates substrate.

It belongs to the aspartate/glutamate racemases family.

It catalyses the reaction L-glutamate = D-glutamate. It participates in cell wall biogenesis; peptidoglycan biosynthesis. Its function is as follows. Provides the (R)-glutamate required for cell wall biosynthesis. The sequence is that of Glutamate racemase from Pseudomonas aeruginosa (strain UCBPP-PA14).